Reading from the N-terminus, the 392-residue chain is Formate-dependent phosphoribosylglycinamide formyltransferase (392 aa).

N(1)-(5-phospho-beta-D-ribosyl)glycinamide-binding positions include 22-23 (EL) and E82. Residues R114, K155, 160–165 (SSGHGQ), 195–198 (EGFI), and E203 each bind ATP. Positions 119–307 (RLAAEELGLK…QFALHARAIL (189 aa)) constitute an ATP-grasp domain. Residues E266 and E278 each contribute to the Mg(2+) site. N(1)-(5-phospho-beta-D-ribosyl)glycinamide contacts are provided by residues D285, K355, and 362–363 (RR).

This sequence belongs to the PurK/PurT family. In terms of assembly, homodimer.

The protein resides in the cell inner membrane. The enzyme catalyses N(1)-(5-phospho-beta-D-ribosyl)glycinamide + formate + ATP = N(2)-formyl-N(1)-(5-phospho-beta-D-ribosyl)glycinamide + ADP + phosphate + H(+). The protein operates within purine metabolism; IMP biosynthesis via de novo pathway; N(2)-formyl-N(1)-(5-phospho-D-ribosyl)glycinamide from N(1)-(5-phospho-D-ribosyl)glycinamide (formate route): step 1/1. Involved in the de novo purine biosynthesis. Catalyzes the transfer of formate to 5-phospho-ribosyl-glycinamide (GAR), producing 5-phospho-ribosyl-N-formylglycinamide (FGAR). Formate is provided by PurU via hydrolysis of 10-formyl-tetrahydrofolate. This chain is Formate-dependent phosphoribosylglycinamide formyltransferase, found in Mannheimia haemolytica (Pasteurella haemolytica).